The following is a 162-amino-acid chain: Allantoicase (162 aa).

It belongs to the allantoicase family. Homohexamer. In terms of tissue distribution, expressed in zygote.

It catalyses the reaction allantoate + H2O = (S)-ureidoglycolate + urea. It functions in the pathway nitrogen metabolism; (S)-allantoin degradation; (S)-ureidoglycolate from allantoate (aminidohydrolase route): step 1/1. In terms of biological role, catalyzes the degradation of allantoate to (-)-ureidoglycolate and (+)-ureidoglycolate to glyoxylate. In Chlamydomonas reinhardtii (Chlamydomonas smithii), this protein is Allantoicase.